Consider the following 62-residue polypeptide: Paralithocin 1 (62 aa).

Positions 1-23 (MGPMKVLLVLLVVMVAAPHIADA) are cleaved as a signal peptide. Intrachain disulfides connect Cys29–Cys55, Cys33–Cys51, Cys37–Cys49, and Cys42–Cys52. The residue at position 61 (Tyr61) is a Tyrosine amide; partial.

This sequence belongs to the paralithocin family. The amidated form is probably the active form.

In terms of biological role, has weak antibacterial activity, mainly against marine Gram-positive bacteria like C.maltaromaticum (MIC=200 uM), C.mobile (MIC=100 uM), C.divergens (MIC=200 uM) and C.funditum (MIC=200 uM) but also against C.glutamicum (MIC=50 uM). Has very little or no activity against Gram-negative bacteria. The sequence is that of Paralithocin 1 from Paralithodes camtschaticus (Red king crab).